We begin with the raw amino-acid sequence, 211 residues long: MYQPDFPTVPFRLGLYPVVDSVAWIERLLEVGVRTIQLRIKDKRNEEVEADVIAAIALGRRYDARLFINDYWRLAIKHRAYGVHLGQEDLETTDLKAIQAAGLRLGVSTHDDMEIDVALAAKPSYIALGHVFPTQTKQMPSAPQGLAQLASHIERLADYPTVAIGGISLERAPAVLATGVGSVAVVSAITQAADWREATAQLLAIVGVGDE.

Residues 37–41 (QLRIK) and Asn-69 each bind 4-amino-2-methyl-5-(diphosphooxymethyl)pyrimidine. Mg(2+) contacts are provided by Asp-70 and Asp-89. Residue Ser-108 coordinates 4-amino-2-methyl-5-(diphosphooxymethyl)pyrimidine. 134 to 136 (TQT) lines the 2-[(2R,5Z)-2-carboxy-4-methylthiazol-5(2H)-ylidene]ethyl phosphate pocket. Residue Lys-137 coordinates 4-amino-2-methyl-5-(diphosphooxymethyl)pyrimidine. Residues Gly-166 and 186 to 187 (VS) each bind 2-[(2R,5Z)-2-carboxy-4-methylthiazol-5(2H)-ylidene]ethyl phosphate.

Belongs to the thiamine-phosphate synthase family. The cofactor is Mg(2+).

It catalyses the reaction 2-[(2R,5Z)-2-carboxy-4-methylthiazol-5(2H)-ylidene]ethyl phosphate + 4-amino-2-methyl-5-(diphosphooxymethyl)pyrimidine + 2 H(+) = thiamine phosphate + CO2 + diphosphate. The enzyme catalyses 2-(2-carboxy-4-methylthiazol-5-yl)ethyl phosphate + 4-amino-2-methyl-5-(diphosphooxymethyl)pyrimidine + 2 H(+) = thiamine phosphate + CO2 + diphosphate. The catalysed reaction is 4-methyl-5-(2-phosphooxyethyl)-thiazole + 4-amino-2-methyl-5-(diphosphooxymethyl)pyrimidine + H(+) = thiamine phosphate + diphosphate. It participates in cofactor biosynthesis; thiamine diphosphate biosynthesis; thiamine phosphate from 4-amino-2-methyl-5-diphosphomethylpyrimidine and 4-methyl-5-(2-phosphoethyl)-thiazole: step 1/1. In terms of biological role, condenses 4-methyl-5-(beta-hydroxyethyl)thiazole monophosphate (THZ-P) and 2-methyl-4-amino-5-hydroxymethyl pyrimidine pyrophosphate (HMP-PP) to form thiamine monophosphate (TMP). This Salmonella choleraesuis (strain SC-B67) protein is Thiamine-phosphate synthase.